The chain runs to 248 residues: tRNA pseudouridine synthase A (248 aa).

Aspartate 54 functions as the Nucleophile in the catalytic mechanism. Position 112 (tyrosine 112) interacts with substrate.

This sequence belongs to the tRNA pseudouridine synthase TruA family. In terms of assembly, homodimer.

It catalyses the reaction uridine(38/39/40) in tRNA = pseudouridine(38/39/40) in tRNA. Formation of pseudouridine at positions 38, 39 and 40 in the anticodon stem and loop of transfer RNAs. The sequence is that of tRNA pseudouridine synthase A from Geobacillus sp. (strain WCH70).